We begin with the raw amino-acid sequence, 329 residues long: tRNA pseudouridine synthase B (329 aa).

D42 serves as the catalytic Nucleophile.

The protein belongs to the pseudouridine synthase TruB family. Type 1 subfamily.

The enzyme catalyses uridine(55) in tRNA = pseudouridine(55) in tRNA. Functionally, responsible for synthesis of pseudouridine from uracil-55 in the psi GC loop of transfer RNAs. This is tRNA pseudouridine synthase B from Lactococcus lactis subsp. lactis (strain IL1403) (Streptococcus lactis).